The chain runs to 600 residues: Translation initiation factor IF-2 (600 aa).

The region spanning 112–279 is the tr-type G domain; the sequence is ERAPIITVMG…AINLQAEILE (168 aa). The segment at 121–128 is G1; sequence GHVDHGKT. A GTP-binding site is contributed by 121–128; the sequence is GHVDHGKT. Residues 146 to 150 are G2; that stretch reads GITQH. Residues 167-170 form a G3 region; that stretch reads DTPG. GTP-binding positions include 167–171 and 221–224; these read DTPGH and NKMD. The interval 221–224 is G4; the sequence is NKMD. The segment at 257–259 is G5; it reads SAL.

It belongs to the TRAFAC class translation factor GTPase superfamily. Classic translation factor GTPase family. IF-2 subfamily.

It localises to the cytoplasm. Its function is as follows. One of the essential components for the initiation of protein synthesis. Protects formylmethionyl-tRNA from spontaneous hydrolysis and promotes its binding to the 30S ribosomal subunits. Also involved in the hydrolysis of GTP during the formation of the 70S ribosomal complex. The protein is Translation initiation factor IF-2 of Mycoplasma mobile (strain ATCC 43663 / 163K / NCTC 11711) (Mesomycoplasma mobile).